A 328-amino-acid polypeptide reads, in one-letter code: Protein FAM76B (328 aa).

The disordered stretch occupies residues 143–232 (KEQRKGLGSS…ITQSMDSGGT (90 aa)). Positions 148-159 (GLGSSHSNSSSL) are enriched in low complexity. A compositionally biased stretch (basic residues) spans 165 to 183 (QRHHHHHQHHRHGSSHHKI). Positions 185–201 (GNLSPEQDQGLWKQSIQ) are enriched in polar residues. The residue at position 188 (S188) is a Phosphoserine. A compositionally biased stretch (basic and acidic residues) spans 203-213 (ETPKKKPKLET). The span at 216–232 (SNGDSSSITQSMDSGGT) shows a compositional bias: polar residues. Positions 237–316 (LISQLKEEVM…KQVAALSKGK (80 aa)) form a coiled coil.

This sequence belongs to the FAM76 family. Highly expressed in hematopoietic and immune systems including in the thymus, spleen, kidney, and blood vessel.

Its function is as follows. Plays a role in hematopoiesis and immune system development, and participates in the inflammatory response. The sequence is that of Protein FAM76B (fam76b) from Danio rerio (Zebrafish).